The primary structure comprises 460 residues: Bifunctional protein GlmU (460 aa).

Positions Met-1–Lys-229 are pyrophosphorylase. UDP-N-acetyl-alpha-D-glucosamine is bound by residues Leu-9–Gly-12, Lys-23, Gln-74, Gly-79–Thr-80, Tyr-101–Asp-103, Gly-138, Glu-154, Asn-169, and Asn-227. Asp-103 serves as a coordination point for Mg(2+). Residue Asn-227 coordinates Mg(2+). The segment at Val-230 to Gln-250 is linker. An N-acetyltransferase region spans residues Gly-251 to Asn-460. Residues Arg-333 and Lys-351 each coordinate UDP-N-acetyl-alpha-D-glucosamine. His-363 serves as the catalytic Proton acceptor. UDP-N-acetyl-alpha-D-glucosamine contacts are provided by Tyr-366 and Asn-377. Acetyl-CoA is bound by residues Ala-380, Asn-386–Tyr-387, Ser-405, Ala-423, and Arg-440.

It in the N-terminal section; belongs to the N-acetylglucosamine-1-phosphate uridyltransferase family. This sequence in the C-terminal section; belongs to the transferase hexapeptide repeat family. In terms of assembly, homotrimer. Mg(2+) serves as cofactor.

The protein resides in the cytoplasm. The catalysed reaction is alpha-D-glucosamine 1-phosphate + acetyl-CoA = N-acetyl-alpha-D-glucosamine 1-phosphate + CoA + H(+). The enzyme catalyses N-acetyl-alpha-D-glucosamine 1-phosphate + UTP + H(+) = UDP-N-acetyl-alpha-D-glucosamine + diphosphate. It functions in the pathway nucleotide-sugar biosynthesis; UDP-N-acetyl-alpha-D-glucosamine biosynthesis; N-acetyl-alpha-D-glucosamine 1-phosphate from alpha-D-glucosamine 6-phosphate (route II): step 2/2. The protein operates within nucleotide-sugar biosynthesis; UDP-N-acetyl-alpha-D-glucosamine biosynthesis; UDP-N-acetyl-alpha-D-glucosamine from N-acetyl-alpha-D-glucosamine 1-phosphate: step 1/1. Its pathway is bacterial outer membrane biogenesis; LPS lipid A biosynthesis. In terms of biological role, catalyzes the last two sequential reactions in the de novo biosynthetic pathway for UDP-N-acetylglucosamine (UDP-GlcNAc). The C-terminal domain catalyzes the transfer of acetyl group from acetyl coenzyme A to glucosamine-1-phosphate (GlcN-1-P) to produce N-acetylglucosamine-1-phosphate (GlcNAc-1-P), which is converted into UDP-GlcNAc by the transfer of uridine 5-monophosphate (from uridine 5-triphosphate), a reaction catalyzed by the N-terminal domain. The protein is Bifunctional protein GlmU of Nitrosospira multiformis (strain ATCC 25196 / NCIMB 11849 / C 71).